We begin with the raw amino-acid sequence, 92 residues long: Small ribosomal subunit protein uS19 (92 aa).

This sequence belongs to the universal ribosomal protein uS19 family.

Its function is as follows. Protein S19 forms a complex with S13 that binds strongly to the 16S ribosomal RNA. The chain is Small ribosomal subunit protein uS19 from Rhodospirillum rubrum (strain ATCC 11170 / ATH 1.1.1 / DSM 467 / LMG 4362 / NCIMB 8255 / S1).